A 203-amino-acid chain; its full sequence is FMN-dependent NADH:quinone oxidoreductase (203 aa).

FMN is bound by residues Ser9 and 15 to 17 (SKS).

Belongs to the azoreductase type 1 family. As to quaternary structure, homodimer. FMN is required as a cofactor.

It catalyses the reaction 2 a quinone + NADH + H(+) = 2 a 1,4-benzosemiquinone + NAD(+). The enzyme catalyses N,N-dimethyl-1,4-phenylenediamine + anthranilate + 2 NAD(+) = 2-(4-dimethylaminophenyl)diazenylbenzoate + 2 NADH + 2 H(+). Its function is as follows. Quinone reductase that provides resistance to thiol-specific stress caused by electrophilic quinones. Also exhibits azoreductase activity. Catalyzes the reductive cleavage of the azo bond in aromatic azo compounds to the corresponding amines. The chain is FMN-dependent NADH:quinone oxidoreductase from Bordetella avium (strain 197N).